A 616-amino-acid chain; its full sequence is Glycogenin-1 (616 aa).

Residues Leu-10, Tyr-16, and Arg-95 each contribute to the UDP site. 11 residues coordinate UDP-alpha-D-glucose: Leu-10, Tyr-16, Arg-95, Lys-104, Asp-120, Asp-122, Asn-158, Ser-159, Asp-185, Asp-188, and Gln-189. The UDP site is built by Asp-120 and Asp-122. Positions 120 and 122 each coordinate Mn(2+). A glycan (O-linked (Glc...) tyrosine) is linked at Tyr-230. Positions 247, 250, and 253 each coordinate UDP. Residue His-247 participates in Mn(2+) binding. Gly-250 and Lys-253 together coordinate UDP-alpha-D-glucose. A compositionally biased stretch (basic and acidic residues) spans 283–302 (HQLNNEVSKPKISDSDKTET). Disordered regions lie at residues 283-320 (HQLNNEVSKPKISDSDKTETPETITPVDAPPSNEPTTN), 335-354 (NQNAEPVPNSDHSPAPNPVP), 371-525 (TNQP…EKDK), and 553-588 (RDATEGETKTSAVADKQEDMKLTAEETNQPQQEMPN). A compositionally biased stretch (basic and acidic residues) spans 377 to 386 (ESREYSKEND). Residues 400 to 419 (SPPNSTQELNSSYSVVSTQA) are compositionally biased toward polar residues. Positions 450–461 (STAASSNNNVSN) are enriched in low complexity. 2 stretches are compositionally biased toward polar residues: residues 462 to 485 (QPDGKNFSNSKENNISVESSPSNP) and 492 to 503 (DNIQKPSVSTND). Residues 567 to 576 (DKQEDMKLTA) show a composition bias toward basic and acidic residues. Positions 577 to 586 (EETNQPQQEM) are enriched in polar residues. The O-linked (Glc...) tyrosine glycan is linked to Tyr-598.

This sequence belongs to the glycosyltransferase 8 family. Glycogenin subfamily. Requires Mn(2+) as cofactor.

It is found in the cytoplasm. Its subcellular location is the vacuole. It carries out the reaction L-tyrosyl-[glycogenin] + UDP-alpha-D-glucose = alpha-D-glucosyl-L-tyrosyl-[glycogenin] + UDP + H(+). It catalyses the reaction [1,4-alpha-D-glucosyl](n)-L-tyrosyl-[glycogenin] + UDP-alpha-D-glucose = [1,4-alpha-D-glucosyl](n+1)-L-tyrosyl-[glycogenin] + UDP + H(+). Its function is as follows. Self-glucosylating initiator of glycogen synthesis. It catalyzes the formation of a short alpha (1,4)-glucosyl chain covalently attached via a glucose 1-O-tyrosyl linkage to internal tyrosine residues and these chains act as primers for the elongation reaction catalyzed by glycogen synthase. Capable of transferring glucosyl residues to unbound acceptors such as free oligoglucans or oligoglucan derivatives. In Saccharomyces cerevisiae (strain ATCC 204508 / S288c) (Baker's yeast), this protein is Glycogenin-1.